The following is a 234-amino-acid chain: Phosphoglycolate phosphatase (234 aa).

Residue Asp-8 is the Nucleophile of the active site. Mg(2+) is bound by residues Asp-8 and Asp-10. Lys-157 is a substrate binding site. Mg(2+) contacts are provided by Asp-180 and Asp-184.

The protein belongs to the archaeal SPP-like hydrolase family. The cofactor is Mg(2+).

The enzyme catalyses 2-phosphoglycolate + H2O = glycolate + phosphate. Its function is as follows. Catalyzes the dephosphorylation of 2-phosphoglycolate. The polypeptide is Phosphoglycolate phosphatase (Methanoculleus marisnigri (strain ATCC 35101 / DSM 1498 / JR1)).